Consider the following 577-residue polypeptide: Guanine nucleotide-binding protein-like 3-like protein (577 aa).

Residues 1-30 (MMKIRHKNKKPGKGSKGCKKPARQNGKKVT) are compositionally biased toward basic residues. The interval 1 to 75 (MMKIRHKNKK…VAREQERQRH (75 aa)) is disordered. Residues 9-28 (KKPGKGSKGCKKPARQNGKK) are required for nucleolar localization. The span at 42 to 75 (GNDHASREAELKKKRVEEMREKQQVAREQERQRH) shows a compositional bias: basic and acidic residues. The stretch at 43–103 (NDHASREAEL…QKEEVLQELN (61 aa)) forms a coiled coil. In terms of domain architecture, CP-type G spans 118–304 (YKEFRKVVEY…LLDAPGIVPG (187 aa)). GTP contacts are provided by residues 166–169 (NKID), 253–260 (GLPNVGKS), and 297–300 (DAPG).

This sequence belongs to the TRAFAC class YlqF/YawG GTPase family. In terms of assembly, interacts with MDM2; this interaction, which occurs in the nucleoplasm, stabilizes MDM2. Indirectly interacts with TP53, via MDM2-binding. Interacts with TERF1; this interaction probably occurs in the nucleoplasm and is increased during mitosis, when the nucleolus is disassembled. This binding may promote TERF1 homodimerization. Interacts with TERT.

The protein localises to the nucleus. The protein resides in the nucleolus. Stabilizes TERF1 telomeric association by preventing TERF1 recruitment by PML. Stabilizes TERF1 protein by preventing its ubiquitination and hence proteasomal degradation. Does so by interfering with TERF1-binding to FBXO4 E3 ubiquitin-protein ligase. Required for cell proliferation. By stabilizing TRF1 protein during mitosis, promotes metaphase-to-anaphase transition. Stabilizes MDM2 protein by preventing its ubiquitination, and hence proteasomal degradation. By acting on MDM2, may affect TP53 activity. Required for normal processing of ribosomal pre-rRNA. Binds GTP. The polypeptide is Guanine nucleotide-binding protein-like 3-like protein (Gnl3l) (Mus musculus (Mouse)).